Consider the following 584-residue polypeptide: MSVRYSSSKHYSSSRSGGGGGGGGCGGGGGVSSLRISSSKGSLGGGFSSGGFSGGSFSRGSSGGGCFGGSSGGYGGLGGFGGGSFRGSYGSSSFGGSYGGIFGGGSFGGGSFGGGSFGGGGFGGGGFGGGFGGGFGGDGGLLSGNEKVTMQNLNDRLASYLDKVRALEESNYELEGKIKEWYEKHGNSHQGEPRDYSKYYKTIDDLKNQILNLTTDNANILLQIDNARLAADDFRLKYENEVALRQSVEADINGLRRVLDELTLTKADLEMQIESLTEELAYLKKNHEEEMKDLRNVSTGDVNVEMNAAPGVDLTQLLNNMRSQYEQLAEQNRKDAEAWFNEKSKELTTEIDNNIEQISSYKSEITELRRNVQALEIELQSQLALKQSLEASLAETEGRYCVQLSQIQAQISALEEQLQQIRAETECQNTEYQQLLDIKIRLENEIQTYRSLLEGEGSSGGGGRGGGSFGGGYGGGSSGGGSSGGGHGGGHGGSSGGGYGGGSSGGGSSGGGYGGGSSSGGHGGSSSGGYGGGSSGGGGGGYGGGSSGGGSSSGGGYGGGSSSGGHKSSSSGSVGESSSKGPRY.

Residues 1 to 15 (MSVRYSSSKHYSSSR) are compositionally biased toward low complexity. The disordered stretch occupies residues 1–24 (MSVRYSSSKHYSSSRSGGGGGGGG). Positions 1-145 (MSVRYSSSKH…GGDGGLLSGN (145 aa)) are head. 6 positions are modified to phosphoserine: serine 14, serine 16, serine 42, serine 53, serine 56, and serine 170. The interval 146-181 (EKVTMQNLNDRLASYLDKVRALEESNYELEGKIKEW) is coil 1A. Positions 146–460 (EKVTMQNLND…SLLEGEGSSG (315 aa)) constitute an IF rod domain. The linker 1 stretch occupies residues 182–202 (YEKHGNSHQGEPRDYSKYYKT). The interval 203-294 (IDDLKNQILN…KNHEEEMKDL (92 aa)) is coil 1B. The segment at 295–317 (RNVSTGDVNVEMNAAPGVDLTQL) is linker 12. The coil 2 stretch occupies residues 318–456 (LNNMRSQYEQ…QTYRSLLEGE (139 aa)). The interval 453–584 (LEGEGSSGGG…GESSSKGPRY (132 aa)) is disordered. Residues 457–563 (GSSGGGGRGG…GGGYGGGSSS (107 aa)) are compositionally biased toward gly residues. A tail region spans residues 457–584 (GSSGGGGRGG…GESSSKGPRY (128 aa)). A compositionally biased stretch (low complexity) spans 564–584 (GGHKSSSSGSVGESSSKGPRY).

The protein belongs to the intermediate filament family. In terms of assembly, heterotetramer of two type I and two type II keratins. Heterodimer with KRT1. Two heterodimers of KRT1 and KRT10 form a heterotetramer. The KRT10 subunit in the heterotetramer is probably disulfide-linked. Interacts with PLEC isoform 1C, when in a heterodimer with KRT1. (Microbial infection) Interacts (via C-terminal tail domain) with the S.aureus clumping factor, clfB; this interaction probably mediates S.aureus attachment to the keratinized squamous epithelial cells from the nasal cavity. As to quaternary structure, (Microbial infection) Interacts (via the C-terminal tail domain) with S.pneumoniae serine-rich repeat protein PsrP; this interaction probably mediates S.pneumoniae adherence to lung tissue and subsequent pathogenesis. Neither protein has to be glycosylated for the interaction to occur. In terms of tissue distribution, seen in all suprabasal cell layers including stratum corneum. Expressed on the surface of lung cell lines. Localized on the surface of desquamated nasal epithelial cells (at protein level).

The protein localises to the secreted. It localises to the extracellular space. Its subcellular location is the cell surface. It is found in the cytoplasm. Functionally, plays a role in the establishment of the epidermal barrier on plantar skin. Involved in the maintenance of cell layer development and keratin filament bundles in suprabasal cells of the epithelium. In terms of biological role, (Microbial infection) Acts as a mediator of S.aureus adherence to desquamated nasal epithelial cells via clfB, and hence may play a role in nasal colonization. Its function is as follows. (Microbial infection) Binds S.pneumoniae PsrP, mediating adherence of the bacteria to lung cell lines. Reduction of levels of KRT10 keratin decrease adherence, overexpression increases adherence. Neither protein has to be glycosylated for the interaction to occur. The chain is Keratin, type I cytoskeletal 10 (KRT10) from Homo sapiens (Human).